Consider the following 101-residue polypeptide: Putative defensin-like protein 307 (101 aa).

An N-terminal signal peptide occupies residues 1-22 (MEKSALIFIGILLFSTCTSIMA). Disulfide bonds link cysteine 29–cysteine 49, cysteine 35–cysteine 54, and cysteine 40–cysteine 56.

It belongs to the DEFL family.

The protein localises to the secreted. This is Putative defensin-like protein 307 from Arabidopsis thaliana (Mouse-ear cress).